An 846-amino-acid polypeptide reads, in one-letter code: MDLQDFSHKLAEATKNLTPAERASLKKIFEGVSAEVFSQPAPVSAVATGAESGIPDGPTPRHVKLKENFLKQVPSITVQRAVAITKIAKENPGLPKPLLRAKTFRYCCETAPLVIQDHELIVGSPNGAPRAGAFSPEVAWRWLQDELDTIGSRPQDPFYISEEDKKVLREEVFPFWQNKSVDEFCEGQYREADLWEMSGESFVSDCSYHAVNGGGDSNPGYDVILMKKGMLDIQREAREKLEQLDYANPEDIDKIYFYKSVIETAEGVMIYARRLSAYAAELAARETDPRRKAELQKISEVNARVPAHAPSNFWEAIQAVWTVESLLVVEENQTGMSIGRVDQYMYPFYRADIDSGRLTEYEAFDLAGCMLVKMSEMMWITSEGASKFFAGYQPFVNMCVGGVTREGHDATNDLTYMLMDAVRHVRIYQPTLATRVHNKSPQKYLKKIVDVIRSGMGFPAVHFDDAHIKMMLAKGVSIEDARDYCLMGCVEPQKSGRLYQWTSTGYTQWPICIELVLNHGVPLWYGKKVTPDMGDLSQYDTYEKFEAAVKEQIRWITKNTSVATVISQRAHRELAPKPLMSLMYEGCMESGRDVSAGGAMYNFGPGVVWSGLATYVDSMAAIKKLVYDDRKYTLAQLNEALKADFAGYDQILADCLAAPKYGNDDDYADMIAADLVHFTETEHRKYKTLYSVLSHGTLSISNNTPFGQLLGASANGRRAWMPLSDGISPTQGADYKGPTAIIKSVSKMANDNMNIGMVHNFKLMSGLLDTPEGENGLITLIRTACMLGNGEMQFNYLDNELLLDAQKHPEKYRDLVVRVAGYSAFFVELCKDVQDEIISRTMLHGF.

The region spanning 60–718 (PRHVKLKENF…LLGASANGRR (659 aa)) is the PFL domain. The active-site Cysteine radical intermediate is the Cys-489. The Proton acceptor role is filled by Glu-491. The 122-residue stretch at 725–846 (DGISPTQGAD…IISRTMLHGF (122 aa)) folds into the Glycine radical domain. Position 821 is a glycine radical (Gly-821).

This sequence belongs to the glycyl radical enzyme (GRE) family. CutC subfamily. As to quaternary structure, homodimer. Post-translationally, requires the activating protein CutD to generate the key active site glycyl radical on Gly-821 that is involved in catalysis.

It carries out the reaction choline = trimethylamine + acetaldehyde. It functions in the pathway amine and polyamine metabolism; choline degradation. Functionally, glycine radical enzyme that catalyzes the cleavage of a C-N bond in choline, producing trimethylamine (TMA) and acetaldehyde. Is involved in the anaerobic choline utilization pathway that allows D.alaskensis to grow on choline as a source of carbon and energy. Is strictly specific for choline as substrate. The chain is Choline trimethylamine-lyase from Oleidesulfovibrio alaskensis (strain ATCC BAA-1058 / DSM 17464 / G20) (Desulfovibrio alaskensis).